Consider the following 520-residue polypeptide: Macrophage receptor MARCO (520 aa).

Topologically, residues 1–43 (MRNKKILKEDELLSETQQAAFHQIAMEPFEINVPKPKRRNGVN) are cytoplasmic. A helical; Signal-anchor for type II membrane protein membrane pass occupies residues 44–64 (FSLAVVVIYLILLTAGAGLLV). Residues 65–520 (VQVLNLQARL…EEDAGVECSV (456 aa)) are Extracellular-facing. Residues N83 and N136 are each glycosylated (N-linked (GlcNAc...) asparagine). The segment at 142–423 (GMFRIKGEQG…KGERGENSVS (282 aa)) is disordered. The region spanning 147–419 (KGEQGAPGLQ…VKGEKGERGE (273 aa)) is the Collagen-like domain. Composition is skewed to low complexity over residues 203–227 (EAGLQGPQGAPGKQGATGTPGPQGE), 290–345 (LAGF…PGAT), and 380–398 (SPGLAGPKGAPGQAGQKGD). A compositionally biased stretch (basic and acidic residues) spans 410–419 (VKGEKGERGE). Positions 424–519 (VRIVGSSNRG…HEEDAGVECS (96 aa)) constitute an SRCR domain. 3 cysteine pairs are disulfide-bonded: C447/C508, C460/C518, and C488/C498.

Homotrimer; disulfide-linked. Trimers may assemble in larger oligomers thus resulting in the creation of a large surface capable of interacting with very large ligands. N-glycosylated. As to expression, expressed in alveolar macrophages (at protein level). Detected in macrophages from various tissues including thymus, kidney, Kupffer cells of liver, and spleen.

Its subcellular location is the cell membrane. Its function is as follows. Pattern recognition receptor (PRR) which binds Gram-positive and Gram-negative bacteria. Also plays a role in binding of unopsonized particles by alveolar macrophages. Binds to the secretoglobin SCGB3A2. The sequence is that of Macrophage receptor MARCO (MARCO) from Homo sapiens (Human).